We begin with the raw amino-acid sequence, 124 residues long: Glutaredoxin-2 (124 aa).

Cysteine 13 and cysteine 16 are oxidised to a cystine.

Belongs to the glutaredoxin family. As to quaternary structure, homodimer.

It localises to the host cytoplasm. Glutaredoxin necessary for virion morphogenesis and virus replication. Functions as a thiol-disulfide transfer protein between membrane-associated OPG128 and substrates OPG095 or OPG053. The complete pathway for formation of disulfide bonds in intracellular virion membrane proteins sequentially involves oxidation of OPG072, OPG128 and OPG088. Exhibit thioltransferase and dehydroascorbate reductase activities in vitro. The sequence is that of Glutaredoxin-2 (OPG088) from Mus musculus (Mouse).